Consider the following 339-residue polypeptide: Ketol-acid reductoisomerase (NADP(+)) (339 aa).

Positions 1 to 182 (MRVYYDRDAD…GGGRAGIIET (182 aa)) constitute a KARI N-terminal Rossmann domain. NADP(+) is bound by residues 24–27 (YGSQ), R48, S51, T53, and 83–86 (DELQ). H108 is a catalytic residue. Residue G134 coordinates NADP(+). The region spanning 183–328 (TFKEECETDL…AELRAMMPWI (146 aa)) is the KARI C-terminal knotted domain. The Mg(2+) site is built by D191, E195, E227, and E231. S252 lines the substrate pocket.

This sequence belongs to the ketol-acid reductoisomerase family. It depends on Mg(2+) as a cofactor.

The enzyme catalyses (2R)-2,3-dihydroxy-3-methylbutanoate + NADP(+) = (2S)-2-acetolactate + NADPH + H(+). It catalyses the reaction (2R,3R)-2,3-dihydroxy-3-methylpentanoate + NADP(+) = (S)-2-ethyl-2-hydroxy-3-oxobutanoate + NADPH + H(+). Its pathway is amino-acid biosynthesis; L-isoleucine biosynthesis; L-isoleucine from 2-oxobutanoate: step 2/4. It functions in the pathway amino-acid biosynthesis; L-valine biosynthesis; L-valine from pyruvate: step 2/4. Functionally, involved in the biosynthesis of branched-chain amino acids (BCAA). Catalyzes an alkyl-migration followed by a ketol-acid reduction of (S)-2-acetolactate (S2AL) to yield (R)-2,3-dihydroxy-isovalerate. In the isomerase reaction, S2AL is rearranged via a Mg-dependent methyl migration to produce 3-hydroxy-3-methyl-2-ketobutyrate (HMKB). In the reductase reaction, this 2-ketoacid undergoes a metal-dependent reduction by NADPH to yield (R)-2,3-dihydroxy-isovalerate. The protein is Ketol-acid reductoisomerase (NADP(+)) of Beijerinckia indica subsp. indica (strain ATCC 9039 / DSM 1715 / NCIMB 8712).